A 181-amino-acid polypeptide reads, in one-letter code: Oligoribonuclease (181 aa).

The Exonuclease domain occupies 8-171 (LIWIDLEMTG…DDIRESVAEL (164 aa)). Tyr-129 is an active-site residue.

This sequence belongs to the oligoribonuclease family.

It localises to the cytoplasm. In terms of biological role, 3'-to-5' exoribonuclease specific for small oligoribonucleotides. This Yersinia enterocolitica serotype O:8 / biotype 1B (strain NCTC 13174 / 8081) protein is Oligoribonuclease.